The chain runs to 376 residues: Lateral eye opsin (376 aa).

Residues 1-46 (MANQLSYSSLGWPYQPNASVVDTMPKEMLYMIHEHWYAFPPMNPLW) lie on the Extracellular side of the membrane. N-linked (GlcNAc...) asparagine glycosylation occurs at asparagine 17. Residues 47-71 (YSILGVAMIILGIICVLGNGMVIYL) form a helical membrane-spanning segment. Over 72-83 (MMTTKSLRTPTN) the chain is Cytoplasmic. A helical membrane pass occupies residues 84 to 108 (LLVVNLAFSDFCMMAFMMPTMTSNC). The Extracellular segment spans residues 109–123 (FAETWILGPFMCEVY). Cysteine 120 and cysteine 197 form a disulfide bridge. Residues 124-143 (GMAGSLFGCASIWSMVMITL) traverse the membrane as a helical segment. At 144–162 (DRYNVIVRGMAAAPLTHKK) the chain is on the cytoplasmic side. Residues 163–186 (ATLLLLFVWIWSGGWTILPFFGWS) form a helical membrane-spanning segment. Topologically, residues 187–210 (RYVPEGNLTSCTVDYLTKDWSSAS) are extracellular. Asparagine 193 is a glycosylation site (N-linked (GlcNAc...) asparagine). Residues 211 to 238 (YVVIYGLAVYFLPLITMIYCYFFIVHAV) traverse the membrane as a helical segment. Over 239-274 (AEHEKQLREQAKKMNVASLRANADQQKQSAECRLAK) the chain is Cytoplasmic. A helical transmembrane segment spans residues 275–298 (VAMMTVGLWFMAWTPYLIISWAGV). The Extracellular portion of the chain corresponds to 299–306 (FSSGTRLT). The chain crosses the membrane as a helical span at residues 307–331 (PLATIWGSVFAKANSCYNPIVYGIS). Lysine 318 is subject to N6-(retinylidene)lysine. Residues 332-376 (HPRYKAALYQRFPSLACGSGESGSDVKSEASATTTMEEKPKIPEA) lie on the Cytoplasmic side of the membrane. The interval 349-376 (GSGESGSDVKSEASATTTMEEKPKIPEA) is disordered. The segment covering 367-376 (MEEKPKIPEA) has biased composition (basic and acidic residues).

It belongs to the G-protein coupled receptor 1 family. Opsin subfamily. Phosphorylated on some or all of the serine and threonine residues present in the C-terminal region. Lateral eye.

The protein resides in the membrane. Its function is as follows. Visual pigments are the light-absorbing molecules that mediate vision. They consist of an apoprotein, opsin, covalently linked to cis-retinal. The protein is Lateral eye opsin of Limulus polyphemus (Atlantic horseshoe crab).